The primary structure comprises 462 residues: Prenyltransferase phqI (462 aa).

Position 101 (E101) interacts with brevianamide F. Residues R117, K204, Y206, K273, Y275, Y357, Y442, and Y446 each coordinate dimethylallyl diphosphate.

It belongs to the tryptophan dimethylallyltransferase family.

It functions in the pathway alkaloid biosynthesis. Functionally, prenyltransferase; part of the gene cluster that mediates the biosynthesis of paraherquamide, a fungal indole alkaloid that belongs to a family of natural products containing a characteristic bicyclo[2.2.2]diazaoctane core. The first steps in the biosynthesis of paraherquamide is the production of the beta-methyl-proline precursor from L-isoleucine. They require oxidation of a terminally hydroxylated L-isoleucine to the corresponding aldehyde by enzymes which have still to be identified. Spontaneous cyclization and dehydration would yield the 4-methyl pyrolline-5-carboxylic acid, which is then reduced by the pyrroline-5-carboxylate reductase phqD leading to the beta-methyl-proline precursor. The next step of paraherquamide biosynthesis involves coupling of beta-methyl-proline and L-tryptophan by the bimodular NRPS phqB, to produce a monooxopiperazine intermediate. The reductase (R) domain of phqB utilizes NADPH for hydride transfer to reduce the thioester bond of the T domain-tethered linear dipeptide to a hemithioaminal intermediate, which spontaneously cleaves the C-S bond to release the aldehyde product. This compound undergoes spontaneous cyclization and dehydration to give a dienamine which is reverse prenylated at C-2 by the reverse prenyltransferase phqJ. The other prenyltransferase present in the cluster, phqI may be a redundant gene in the pathway. During biosynthetic assembly, the key step to produce the polycyclic core is catalyzed by the bifunctional reductase and intramolecular [4+2] Diels-Alderase, phqE, resulting in formation of the [2.2.2] diazaoctane intermediate preparaherquamide. Following formation of preparaherquamide, an indole 2,3-epoxidation-initiated pinacol-like rearrangement is catalyzed by the phqK FAD-dependent monooxygenase. The prenyltransferase phqA, the cytochrome P450 monooxygenase phqL, and the FAD-linked oxidoreductase phqH (or the cytochrome P450 monooxygenase phqM), are proposed to be involved in the formation of the pyran ring. The FAD-dependent monooxygenase phqK is likely responsible for generation of the spiro-oxindole, and the N-methylation is likely mediated by the phqN methyltransferase leading to the isolable natural product paraherquamide F. However, the order of these biosynthetic steps has still to be determined. In late-stage paraherquamide biosynthesis, the third P450 monooxygenase, phqO, is probably responsible for the C-14 hydroxylation, transforming paraherquamide F to paraherquamide G, and paraherquamide E to the final product paraherquamide A. The expansion from the 6-membered ring pyran (in paraherquamides F and G) to the 7-membered dioxepin ring (in paraherquamides A and E) represents a poorly understood but intriguing process that probably involves the 2-oxoglutarate-dependent dioxygenase phqC. Finally, the remaining members of the paraherquamide cluster, including phqI as well as phqM (or phqH), do not have a clearly prescribed role and appear to be redundant. The protein is Prenyltransferase phqI of Penicillium fellutanum.